The following is an 851-amino-acid chain: DEAD-box ATP-dependent RNA helicase 29 (851 aa).

The interval Met-1–Gly-49 is disordered. The segment covering Ser-7–Ser-20 has biased composition (low complexity). Residues Met-24–Ser-42 are compositionally biased toward basic and acidic residues. The short motif at Gly-49–Arg-77 is the Q motif element. One can recognise a Helicase ATP-binding domain in the interval Met-80–Val-253. Residue Ala-93 to Thr-100 coordinates ATP. A DEAD box motif is present at residues Asp-201–Asp-204. Residues Lys-277–Lys-426 form the Helicase C-terminal domain. The interval Lys-702–Arg-851 is disordered. Basic residues predominate over residues Arg-733–Arg-746. 2 stretches are compositionally biased toward basic and acidic residues: residues Asp-773–Phe-787 and Arg-796–Gly-825. Positions Gly-841–Arg-851 are enriched in basic residues.

It belongs to the DEAD box helicase family. DDX54/DBP10 subfamily.

It catalyses the reaction ATP + H2O = ADP + phosphate + H(+). The protein is DEAD-box ATP-dependent RNA helicase 29 of Oryza sativa subsp. indica (Rice).